A 508-amino-acid polypeptide reads, in one-letter code: ATP synthase subunit alpha (508 aa).

Residue 171 to 178 (GDRQTGKT) participates in ATP binding.

It belongs to the ATPase alpha/beta chains family. F-type ATPases have 2 components, CF(1) - the catalytic core - and CF(0) - the membrane proton channel. CF(1) has five subunits: alpha(3), beta(3), gamma(1), delta(1), epsilon(1). CF(0) has three main subunits: a(1), b(2) and c(9-12). The alpha and beta chains form an alternating ring which encloses part of the gamma chain. CF(1) is attached to CF(0) by a central stalk formed by the gamma and epsilon chains, while a peripheral stalk is formed by the delta and b chains.

Its subcellular location is the cell membrane. The catalysed reaction is ATP + H2O + 4 H(+)(in) = ADP + phosphate + 5 H(+)(out). Its function is as follows. Produces ATP from ADP in the presence of a proton gradient across the membrane. The alpha chain is a regulatory subunit. In Protochlamydia amoebophila (strain UWE25), this protein is ATP synthase subunit alpha.